We begin with the raw amino-acid sequence, 508 residues long: MIGIYLLIAAVTLLYVYLKWTFSYWDRKGFPSTGVSIPFGALESVTKGKRSFGMAIYDMYKSTKEPVIGLYLTLRPALLVRDAQLAHDVLVKDFASFHDRGVYVDEKNDPMSASLFQMEGASWRALRNKLTPSFTSGKLKAMFETSDSVGDKLVDSIRKQLPANGAKELELKKLMATYAIDIIATTIFGLDVDSFADPNNEFQIISKKVNRNNIEDIIRGTSSFLYPGLEKFFVKIGWKQEATERMRELSNRTVDLREQNNIVRKDLLQLLLQLRNQGKINTDDNIWSAESTKNGVKSMSKDLIAGQLFLFYVAGYETTASTTSFTLYELTQNPEVMEKAKEDVRSAIEKHGGKLTYDAISDMKYLEACILETARKYPALPLLNRICTKDYPVPDSKLVIQKGTPIIISLIGMHRDEEYFPDPLAYKPERYLENGKDYTQAAYLPFGEGPRMCIGARMGKVNVKIAIAKVLSNFDLEIRKEKCEIEFGVYGIPLMPKSGVPVRLSLKK.

Residue Cys-453 coordinates heme.

Belongs to the cytochrome P450 family. The cofactor is heme.

It localises to the endoplasmic reticulum membrane. The protein resides in the microsome membrane. In terms of biological role, may be involved in the metabolism of insect hormones and in the breakdown of synthetic insecticides. The sequence is that of Probable cytochrome P450 6d5 (Cyp6d5) from Drosophila melanogaster (Fruit fly).